Consider the following 359-residue polypeptide: MMKENINDFLNTILKGDCIEKLKTIPNESIDLIFADPPYFMQTEGKLLRTNGDEFSGVDDEWDKFNDFVEYDSFCELWLKECKRILKSTGSIWVIGSFQNIYRIGYIMQNLDFWILNDVIWNKTNPVPNFGGTRFCNAHETMLWCSKCKKNKFTFNYKTMKHLNQEKQERSVWSLSLCTGKERIKDEEGKKAHSTQKPESLLYKVILSSSKPNDVVLDPFFGTGTTGAVAKALGRNYIGIEREQKYIDVAEKRLREIKPNPNDIELLSLEIKPPKVPMKTLIEADFLRVGQTLFDKNENAICIVTQDGNVKDNEETLSIHKMSAKYLNKTNNNGWDYFYLFRNNNFITLDSLRYEYTNQ.

The region spanning 275-358 is the RAMA domain; the sequence is KVPMKTLIEA…LDSLRYEYTN (84 aa).

It belongs to the N(4)/N(6)-methyltransferase family.

It carries out the reaction a 2'-deoxyadenosine in DNA + S-adenosyl-L-methionine = an N(6)-methyl-2'-deoxyadenosine in DNA + S-adenosyl-L-homocysteine + H(+). Functionally, a beta subtype methylase that recognizes the double-stranded sequence 5'-GANTC-3', methylates A-2 on both strands, and protects the DNA from cleavage by the HinfI endonuclease. This chain is Type II methyltransferase M.HinfI (hinfIM), found in Haemophilus influenzae.